The primary structure comprises 176 residues: Peptide deformylase (176 aa).

Fe cation-binding residues include cysteine 100 and histidine 142. Glutamate 143 is an active-site residue. Histidine 146 lines the Fe cation pocket.

It belongs to the polypeptide deformylase family. It depends on Fe(2+) as a cofactor.

The enzyme catalyses N-terminal N-formyl-L-methionyl-[peptide] + H2O = N-terminal L-methionyl-[peptide] + formate. Functionally, removes the formyl group from the N-terminal Met of newly synthesized proteins. Requires at least a dipeptide for an efficient rate of reaction. N-terminal L-methionine is a prerequisite for activity but the enzyme has broad specificity at other positions. This chain is Peptide deformylase, found in Elusimicrobium minutum (strain Pei191).